The chain runs to 147 residues: Large ribosomal subunit protein uL15 (147 aa).

Positions 1 to 46 are disordered; that stretch reads MSIRLENLSYTPGARKEKHRKGRGHAAGKGKQAGRGQSGQKKRSTV. Residues 16-28 are compositionally biased toward basic residues; sequence KEKHRKGRGHAAG.

Belongs to the universal ribosomal protein uL15 family. In terms of assembly, part of the 50S ribosomal subunit.

Binds to the 23S rRNA. This Mesomycoplasma hyopneumoniae (strain J / ATCC 25934 / NCTC 10110) (Mycoplasma hyopneumoniae) protein is Large ribosomal subunit protein uL15.